A 231-amino-acid chain; its full sequence is Quercetin 2,3-dioxygenase (231 aa).

His-57, His-59, His-101, and Glu-103 together coordinate a divalent metal cation.

Belongs to the pirin family. Zn(2+) serves as cofactor. Co(2+) is required as a cofactor. The cofactor is Fe(2+).

The enzyme catalyses quercetin + O2 = 2-(3,4-dihydroxybenzoyloxy)-4,6-dihydroxybenzoate + CO. Its pathway is flavonoid metabolism; quercetin degradation. In terms of biological role, has quercetin 2,3-dioxygenase activity in vitro. Its physiological role is unknown; however, may provide a mechanism that would avoid inhibition of key cellular proteins, such as DNA gyrase, by quercetin. This chain is Quercetin 2,3-dioxygenase (yhhW), found in Escherichia coli O157:H7.